The chain runs to 448 residues: Exodeoxyribonuclease 7 large subunit (448 aa).

The protein belongs to the XseA family. Heterooligomer composed of large and small subunits.

It localises to the cytoplasm. The enzyme catalyses Exonucleolytic cleavage in either 5'- to 3'- or 3'- to 5'-direction to yield nucleoside 5'-phosphates.. Functionally, bidirectionally degrades single-stranded DNA into large acid-insoluble oligonucleotides, which are then degraded further into small acid-soluble oligonucleotides. The protein is Exodeoxyribonuclease 7 large subunit of Exiguobacterium sp. (strain ATCC BAA-1283 / AT1b).